Reading from the N-terminus, the 148-residue chain is SsrA-binding protein (148 aa).

A disordered region spans residues 129–148 (ETEKDRDWQREKARLMREKA).

This sequence belongs to the SmpB family.

The protein resides in the cytoplasm. Required for rescue of stalled ribosomes mediated by trans-translation. Binds to transfer-messenger RNA (tmRNA), required for stable association of tmRNA with ribosomes. tmRNA and SmpB together mimic tRNA shape, replacing the anticodon stem-loop with SmpB. tmRNA is encoded by the ssrA gene; the 2 termini fold to resemble tRNA(Ala) and it encodes a 'tag peptide', a short internal open reading frame. During trans-translation Ala-aminoacylated tmRNA acts like a tRNA, entering the A-site of stalled ribosomes, displacing the stalled mRNA. The ribosome then switches to translate the ORF on the tmRNA; the nascent peptide is terminated with the 'tag peptide' encoded by the tmRNA and targeted for degradation. The ribosome is freed to recommence translation, which seems to be the essential function of trans-translation. The polypeptide is SsrA-binding protein (Ralstonia nicotianae (strain ATCC BAA-1114 / GMI1000) (Ralstonia solanacearum)).